The following is a 202-amino-acid chain: Pycsar effector protein PtPycTM (202 aa).

The next 3 membrane-spanning stretches (helical) occupy residues 60-80, 85-105, and 181-201; these read GVVLAFVGVMAAGLITIAADI, LVILCIEGAAAVLILASAVLA, and ILVGMLGLVCLFVLAAGVALG.

It is found in the cell membrane. In terms of biological role, pycsar (pyrimidine cyclase system for antiphage resistance) provides immunity against bacteriophage. The pyrimidine cyclase (PycC) synthesizes cyclic nucleotides in response to infection; these serve as specific second messenger signals. The signals activate the adjacent effector, leading to bacterial cell death and abortive phage infection. A clade D Pycsar system. The effector gene of a two-gene Pycsar system. Expression of this and adjacent uridylate cyclase PtPycC (AC A0A4V2JTK3) probably confers resistance to bacteriophage. The genes are probably only expressed in response to bacteriophage infection. Probably only responds to cUMP (produced by its cognate NTP cyclase), acts by impairing membrane integrity. The protein is Pycsar effector protein PtPycTM of Propioniciclava tarda.